Reading from the N-terminus, the 510-residue chain is 2,3-bisphosphoglycerate-independent phosphoglycerate mutase (510 aa).

Mn(2+) contacts are provided by Asp11 and Ser61. The active-site Phosphoserine intermediate is Ser61. Substrate contacts are provided by residues His124, 154–155 (RD), Arg185, Arg191, 260–263 (RPDR), and Lys333. Residues Asp398, His402, Asp439, His440, and His457 each coordinate Mn(2+).

The protein belongs to the BPG-independent phosphoglycerate mutase family. Monomer. It depends on Mn(2+) as a cofactor.

The enzyme catalyses (2R)-2-phosphoglycerate = (2R)-3-phosphoglycerate. It participates in carbohydrate degradation; glycolysis; pyruvate from D-glyceraldehyde 3-phosphate: step 3/5. Functionally, catalyzes the interconversion of 2-phosphoglycerate and 3-phosphoglycerate. This chain is 2,3-bisphosphoglycerate-independent phosphoglycerate mutase, found in Mycoplasma mobile (strain ATCC 43663 / 163K / NCTC 11711) (Mesomycoplasma mobile).